A 94-amino-acid chain; its full sequence is Pyrimidine/purine nucleoside phosphorylase (94 aa).

Belongs to the nucleoside phosphorylase PpnP family.

The catalysed reaction is a purine D-ribonucleoside + phosphate = a purine nucleobase + alpha-D-ribose 1-phosphate. It catalyses the reaction adenosine + phosphate = alpha-D-ribose 1-phosphate + adenine. It carries out the reaction cytidine + phosphate = cytosine + alpha-D-ribose 1-phosphate. The enzyme catalyses guanosine + phosphate = alpha-D-ribose 1-phosphate + guanine. The catalysed reaction is inosine + phosphate = alpha-D-ribose 1-phosphate + hypoxanthine. It catalyses the reaction thymidine + phosphate = 2-deoxy-alpha-D-ribose 1-phosphate + thymine. It carries out the reaction uridine + phosphate = alpha-D-ribose 1-phosphate + uracil. The enzyme catalyses xanthosine + phosphate = alpha-D-ribose 1-phosphate + xanthine. Its function is as follows. Catalyzes the phosphorolysis of diverse nucleosides, yielding D-ribose 1-phosphate and the respective free bases. Can use uridine, adenosine, guanosine, cytidine, thymidine, inosine and xanthosine as substrates. Also catalyzes the reverse reactions. The sequence is that of Pyrimidine/purine nucleoside phosphorylase from Klebsiella pneumoniae (strain 342).